Consider the following 576-residue polypeptide: Proline--tRNA ligase (576 aa).

It belongs to the class-II aminoacyl-tRNA synthetase family. ProS type 1 subfamily. As to quaternary structure, homodimer.

Its subcellular location is the cytoplasm. The enzyme catalyses tRNA(Pro) + L-proline + ATP = L-prolyl-tRNA(Pro) + AMP + diphosphate. Its function is as follows. Catalyzes the attachment of proline to tRNA(Pro) in a two-step reaction: proline is first activated by ATP to form Pro-AMP and then transferred to the acceptor end of tRNA(Pro). As ProRS can inadvertently accommodate and process non-cognate amino acids such as alanine and cysteine, to avoid such errors it has two additional distinct editing activities against alanine. One activity is designated as 'pretransfer' editing and involves the tRNA(Pro)-independent hydrolysis of activated Ala-AMP. The other activity is designated 'posttransfer' editing and involves deacylation of mischarged Ala-tRNA(Pro). The misacylated Cys-tRNA(Pro) is not edited by ProRS. The chain is Proline--tRNA ligase from Dechloromonas aromatica (strain RCB).